An 815-amino-acid polypeptide reads, in one-letter code: Heme-copper oxidase subunit I+III (815 aa).

Residues 1–467 (MVSRLRGFLA…QLSTLGAFIF (467 aa)) are COX1. Residues 26–46 (LLYLVTSIAFLLIAGSLALLF) form a helical membrane-spanning segment. Position 70 (histidine 70) interacts with Fe(II)-heme a. The next 18 membrane-spanning stretches (helical) occupy residues 71 to 91 (GLIMLLWFASPFAFGLANYIV), 105 to 125 (LNALSYWLYLLSGLVLLASFF), 157 to 177 (LAIFLFSLSVTLGTINFLVTI), 197 to 217 (ILFTVILMLWAFPPLMVGGAL), 242 to 262 (LFWFFGHPEVYILLFPALGAM), 281 to 301 (LTAFLIATIISFVVWMHHMFI), 314 to 334 (ITTILISIPFEMAVMSFIFTL), 339 to 359 (LVYTVPMLFAVGALLNFIIGG), 380 to 400 (VVAHFHYILVGTVTLGLIAGL), 419 to 439 (IHFALAMLGVALTFLPQFALM), 463 to 483 (GAFIFGGSMAIGLVNFLYSLV), 580 to 600 (ALFGLFVSKPLSYLGAIVFLL), 637 to 657 (WVFIASEVATFGSIFSAYFFI), 683 to 703 (LINTIILFTGTMLFTLAYLGV), 708 to 728 (YLITLSGLLGTLFMAIYFLTV), 736 to 756 (LLIAGLGLDAGMYMQAYYVTT), 758 to 778 (AHALHVILGVLATTYLLVKLF), and 791 to 811 (VLAVGIYWGIVEIVWTLVFPL). Histidine 248, tyrosine 252, histidine 297, and histidine 298 together coordinate Cu cation. Positions 248-252 (HPEVY) form a cross-link, 1'-histidyl-3'-tyrosine (His-Tyr). Heme a3 is bound at residue histidine 383. Fe(II)-heme a is bound at residue histidine 385. The segment at 545–815 (DVSNVPLSGG…TLVFPLYYLV (271 aa)) is COX3.

It in the N-terminal section; belongs to the heme-copper respiratory oxidase family. In the C-terminal section; belongs to the cytochrome c oxidase subunit 3 family. The cofactor is heme. Cu cation is required as a cofactor.

The protein resides in the cell membrane. This Aeropyrum pernix (strain ATCC 700893 / DSM 11879 / JCM 9820 / NBRC 100138 / K1) protein is Heme-copper oxidase subunit I+III (aoxB).